A 233-amino-acid polypeptide reads, in one-letter code: UPF0280 protein AF_0649 (233 aa).

The protein belongs to the UPF0280 family.

In Archaeoglobus fulgidus (strain ATCC 49558 / DSM 4304 / JCM 9628 / NBRC 100126 / VC-16), this protein is UPF0280 protein AF_0649.